The primary structure comprises 443 residues: Putative F-box/FBD/LRR-repeat protein At3g49030 (443 aa).

In terms of domain architecture, F-box spans 20–68 (EDRISELPEDLLLQILSDIPTENVIATSVLSKRWRSLWKMVPNLTFDFT). LRR repeat units follow at residues 74-100 (HQTF…QLNF), 152-179 (ILEI…RLYE), 180-205 (VHFK…SVHR), 218-252 (VPSL…NIVG), 272-297 (ISDV…SLES), and 320-345 (KERE…KLTG). The region spanning 357 to 408 (NWNPPKCVPECLLFHLEKFLWTGYEWQRGDEKEVATYILENARLLKKATFST) is the FBD domain.

The chain is Putative F-box/FBD/LRR-repeat protein At3g49030 from Arabidopsis thaliana (Mouse-ear cress).